Reading from the N-terminus, the 121-residue chain is Type II secretion system protein I (121 aa).

The propeptide at 1–6 (MKKQSG) is leader sequence. M7 is modified (N-methylmethionine). Residues 7 to 27 (MTLIEVMVALVVFALAGLAVM) form a helical membrane-spanning segment.

Belongs to the GSP I family. In terms of assembly, type II secretion is composed of four main components: the outer membrane complex, the inner membrane complex, the cytoplasmic secretion ATPase and the periplasm-spanning pseudopilus. Interacts with core component PulG. In terms of processing, cleaved by prepilin peptidase. Post-translationally, methylated by prepilin peptidase at the amino group of the N-terminal methionine once the leader sequence is cleaved by prepilin peptidase.

It is found in the cell inner membrane. Component of the type II secretion system required for the energy-dependent secretion of extracellular factors such as proteases and toxins from the periplasm. Part of the pseudopilus tip complex that is critical for the recognition and binding of secretion substrates. This Klebsiella pneumoniae protein is Type II secretion system protein I (pulI).